A 426-amino-acid chain; its full sequence is Probable indole-3-pyruvate monooxygenase YUCCA8 (426 aa).

29-34 (GAGPSG) contributes to the FAD binding site. An NADP(+)-binding site is contributed by 199–204 (GCGNSG).

The protein belongs to the FMO family. Requires FAD as cofactor. Expressed in root tips and in hydathodes. Expressed in root vasculature and quiescent center, but not in the meristematic zone of the root tip.

It carries out the reaction indole-3-pyruvate + NADPH + O2 + H(+) = (indol-3-yl)acetate + CO2 + NADP(+) + H2O. It functions in the pathway plant hormone metabolism; auxin biosynthesis. Its function is as follows. Involved in auxin biosynthesis. Belongs to the set of redundant YUCCA genes probably responsible for auxin biosynthesis in roots. The chain is Probable indole-3-pyruvate monooxygenase YUCCA8 (YUC8) from Arabidopsis thaliana (Mouse-ear cress).